The chain runs to 523 residues: ATP synthase subunit alpha (523 aa).

ATP is bound at residue 179–186 (GDRQTGKT).

Belongs to the ATPase alpha/beta chains family. In terms of assembly, F-type ATPases have 2 components, CF(1) - the catalytic core - and CF(0) - the membrane proton channel. CF(1) has five subunits: alpha(3), beta(3), gamma(1), delta(1), epsilon(1). CF(0) has three main subunits: a(1), b(2) and c(9-12). The alpha and beta chains form an alternating ring which encloses part of the gamma chain. CF(1) is attached to CF(0) by a central stalk formed by the gamma and epsilon chains, while a peripheral stalk is formed by the delta and b chains.

It localises to the cell inner membrane. The enzyme catalyses ATP + H2O + 4 H(+)(in) = ADP + phosphate + 5 H(+)(out). Produces ATP from ADP in the presence of a proton gradient across the membrane. The alpha chain is a regulatory subunit. The protein is ATP synthase subunit alpha of Vibrio vulnificus (strain YJ016).